The primary structure comprises 332 residues: Lipoyl synthase (332 aa).

[4Fe-4S] cluster-binding residues include cysteine 79, cysteine 84, cysteine 90, cysteine 105, cysteine 109, cysteine 112, and serine 319. A Radical SAM core domain is found at 91 to 308 (FSHGTATFMI…ADYGYEIGFK (218 aa)).

This sequence belongs to the radical SAM superfamily. Lipoyl synthase family. It depends on [4Fe-4S] cluster as a cofactor.

The protein resides in the cytoplasm. The enzyme catalyses [[Fe-S] cluster scaffold protein carrying a second [4Fe-4S](2+) cluster] + N(6)-octanoyl-L-lysyl-[protein] + 2 oxidized [2Fe-2S]-[ferredoxin] + 2 S-adenosyl-L-methionine + 4 H(+) = [[Fe-S] cluster scaffold protein] + N(6)-[(R)-dihydrolipoyl]-L-lysyl-[protein] + 4 Fe(3+) + 2 hydrogen sulfide + 2 5'-deoxyadenosine + 2 L-methionine + 2 reduced [2Fe-2S]-[ferredoxin]. The protein operates within protein modification; protein lipoylation via endogenous pathway; protein N(6)-(lipoyl)lysine from octanoyl-[acyl-carrier-protein]: step 2/2. Its function is as follows. Catalyzes the radical-mediated insertion of two sulfur atoms into the C-6 and C-8 positions of the octanoyl moiety bound to the lipoyl domains of lipoate-dependent enzymes, thereby converting the octanoylated domains into lipoylated derivatives. The sequence is that of Lipoyl synthase from Hahella chejuensis (strain KCTC 2396).